Consider the following 372-residue polypeptide: Anhydro-N-acetylmuramic acid kinase (372 aa).

12 to 19 (GTSMDALD) contacts ATP.

Belongs to the anhydro-N-acetylmuramic acid kinase family.

It carries out the reaction 1,6-anhydro-N-acetyl-beta-muramate + ATP + H2O = N-acetyl-D-muramate 6-phosphate + ADP + H(+). It participates in amino-sugar metabolism; 1,6-anhydro-N-acetylmuramate degradation. Its pathway is cell wall biogenesis; peptidoglycan recycling. Functionally, catalyzes the specific phosphorylation of 1,6-anhydro-N-acetylmuramic acid (anhMurNAc) with the simultaneous cleavage of the 1,6-anhydro ring, generating MurNAc-6-P. Is required for the utilization of anhMurNAc either imported from the medium or derived from its own cell wall murein, and thus plays a role in cell wall recycling. In Coxiella burnetii (strain CbuK_Q154) (Coxiella burnetii (strain Q154)), this protein is Anhydro-N-acetylmuramic acid kinase.